Consider the following 523-residue polypeptide: Major facilitator-type transporter psiT2 (523 aa).

Polar residues predominate over residues 1 to 26 (MSLERSTSPNPTERTSLLSDTASTIS). The segment at 1–45 (MSLERSTSPNPTERTSLLSDTASTISSRDDVEQSSLKQRRTPIPT) is disordered. The next 5 membrane-spanning stretches (helical) occupy residues 88–108 (FYSG…IFML), 125–145 (ALGI…TMML), 149–169 (VCAG…SELT), 175–195 (ALVV…GPLI), and 221–241 (FLPS…GYFF). Asn269 is a glycosylation site (N-linked (GlcNAc...) asparagine). Helical transmembrane passes span 317–337 (FLMF…FTAV), 352–372 (AFSV…PWVL), and 382–402 (HFCM…NPLA). A glycan (N-linked (GlcNAc...) asparagine) is linked at Asn410. 3 helical membrane passes run 419–439 (GLLY…VMAF), 455–474 (LATA…AFCP), and 488–508 (NILG…VGVW).

Belongs to the major facilitator superfamily. TCR/Tet family.

The protein resides in the membrane. In terms of biological role, major facilitator-type transporter; part of the gene cluster that mediates the biosynthesis of psilocybin, a psychotropic tryptamine-derived natural product. This Psilocybe cubensis (Psychedelic mushroom) protein is Major facilitator-type transporter psiT2.